We begin with the raw amino-acid sequence, 822 residues long: Putative ESX-1 scaffolding and assembly protein SaeB (822 aa).

Its function is as follows. May be involved in assembly of the ESX-1 / type VII specialized secretion system (T7SS), which exports several proteins including EsxA and EsxB. Involved in DNA conjugation in recipient (MDK8) but not donor (mc(2)155) strain. The sequence is that of Putative ESX-1 scaffolding and assembly protein SaeB from Mycolicibacterium smegmatis (strain ATCC 700084 / mc(2)155) (Mycobacterium smegmatis).